A 315-amino-acid chain; its full sequence is Lipoyl synthase (315 aa).

[4Fe-4S] cluster-binding residues include C63, C68, C74, C89, C93, C96, and S303. The Radical SAM core domain maps to 75–292; sequence FSHGTATFMI…EKKAYDMGFR (218 aa).

This sequence belongs to the radical SAM superfamily. Lipoyl synthase family. It depends on [4Fe-4S] cluster as a cofactor.

The protein localises to the cytoplasm. It carries out the reaction [[Fe-S] cluster scaffold protein carrying a second [4Fe-4S](2+) cluster] + N(6)-octanoyl-L-lysyl-[protein] + 2 oxidized [2Fe-2S]-[ferredoxin] + 2 S-adenosyl-L-methionine + 4 H(+) = [[Fe-S] cluster scaffold protein] + N(6)-[(R)-dihydrolipoyl]-L-lysyl-[protein] + 4 Fe(3+) + 2 hydrogen sulfide + 2 5'-deoxyadenosine + 2 L-methionine + 2 reduced [2Fe-2S]-[ferredoxin]. The protein operates within protein modification; protein lipoylation via endogenous pathway; protein N(6)-(lipoyl)lysine from octanoyl-[acyl-carrier-protein]: step 2/2. Catalyzes the radical-mediated insertion of two sulfur atoms into the C-6 and C-8 positions of the octanoyl moiety bound to the lipoyl domains of lipoate-dependent enzymes, thereby converting the octanoylated domains into lipoylated derivatives. The sequence is that of Lipoyl synthase from Laribacter hongkongensis (strain HLHK9).